The following is a 304-amino-acid chain: Small glutamine-rich tetratricopeptide repeat-containing protein beta (304 aa).

TPR repeat units follow at residues Leu-15–Asp-49, Ala-85–Asn-118, Ala-119–Tyr-152, and Ser-153–Asn-186. Lys-131 is subject to N6-acetyllysine. 3 positions are modified to phosphoserine: Ser-293, Ser-295, and Ser-297.

It belongs to the SGT family. In terms of assembly, homooligomerize.

In terms of biological role, co-chaperone that binds directly to HSC70 and HSP70 and regulates their ATPase activity. The polypeptide is Small glutamine-rich tetratricopeptide repeat-containing protein beta (SGTB) (Homo sapiens (Human)).